Here is a 451-residue protein sequence, read N- to C-terminus: Sensor histidine kinase CssS (451 aa).

Over 1-9 (MKNKPLAFQ) the chain is Cytoplasmic. Residues 10–30 (IWVVISGILLAISILLLVLFS) traverse the membrane as a helical segment. Residues 31–165 (NTLRDFFTNE…RDDLAYTLFK (135 aa)) are Extracellular-facing. The helical transmembrane segment at 166-186 (QLLFIIAVVILLSWIPAIWLA) threads the bilayer. One can recognise an HAMP domain in the interval 187–239 (KYLSRPLVSFEKHVKRISEQDWDDPVKVDRKDEIGKLGHTIEEMRQKLVQKDE). Residues 187 to 451 (KYLSRPLVSF…GVTYRIAVPK (265 aa)) lie on the Cytoplasmic side of the membrane. Residues 247 to 451 (NISHDLKTPV…GVTYRIAVPK (205 aa)) form the Histidine kinase domain. At histidine 250 the chain carries Phosphohistidine; by autocatalysis.

It is found in the cell membrane. It catalyses the reaction ATP + protein L-histidine = ADP + protein N-phospho-L-histidine.. Member of the two-component regulatory system CssS/CssR required to control the cellular response to secretion stress. Required for the transcription of htrA. Could detect misfolded proteins at the membrane-cell wall interface and then activate CssR by phosphorylation. The polypeptide is Sensor histidine kinase CssS (cssS) (Bacillus subtilis (strain 168)).